Reading from the N-terminus, the 548-residue chain is MPTSLEQAAALIGGVGTHLLYFKHGERHAYPWRYVALLLAGSLSLWAFKWSREGTTTSILAVTSSTSVLLFLYLGGLAGSVLLYRLFFNPLNRFPGPFAARLSKLYFVYLSSDLRGHRKLHELHQKYGRYVRVGPNDLSVVDPDGMKIVLGANSKCTKSAWYGQDMPYISTNTTRDRAAHDRRRRILAPAFSDKALRGYASRLQKFHDLLTSQIDASAGKPMNVTKWFGYWGMDMMCDIVFNGSFNMLASGETHWALQVVGDGLHLQGFALPPWLYRVFATMPKSSSGSRGLAAFAATQLENRMQQQGKTAHADMMQPLIEHYDRLSTDTKRAILPLLQGDSRMLIVAGSDTTSTTLVHMFYRFCKESGLVDRVREEVEPLVSDPNLISYSDIRQAQLLHACINETLRLHYPGPSGFFRKTPPEGIHIGEQHVPGDTIIQMPPYVMGLDEEVYERCSEFVPERWYSKPEMIKHKDAFLPFLAGSESCIGKNLAYIQLAVVASQIILQFDVAFAPGEDGNKLVRESKDLGMLHPEDLHVVFTRRGKTHS.

Transmembrane regions (helical) follow at residues 28-48 and 68-88; these read HAYP…LWAF and VLLF…RLFF. Asparagine 172, asparagine 223, asparagine 242, and asparagine 404 each carry an N-linked (GlcNAc...) asparagine glycan. Residue cysteine 487 coordinates heme.

Belongs to the cytochrome P450 family. It depends on heme as a cofactor.

It localises to the membrane. Its pathway is secondary metabolite biosynthesis. In terms of biological role, cytochrome P450 monooxygenase; part of the gene cluster that mediates the biosynthesis of the lipopeptide antibiotics leucinostatins that show extensive biological activities, including antimalarial, antiviral, antibacterial, antifungal, and antitumor activities, as well as phytotoxic. Leucinostatin A contains nine amino acid residues, including the unusual amino acid 4-methyl-L-proline (MePro), 2-amino-6-hydroxy-4-methyl-8-oxodecanoic acid (AHyMeOA), 3-hydroxyleucine (HyLeu), alpha-aminoisobutyric acid (AIB), beta-Ala, a 4-methylhex-2-enoic acid at the N-terminus as well as a N1,N1-dimethylpropane-1,2-diamine (DPD) at the C-terminus. The biosynthesis of leucinostatins is probably initiated with the assembly of 4-methylhex-2-enoic acid by a reducing PKS. Two reducing polyketide synthases, lcsB and lcsC, have been identified in the cluster and it is not clear which is the one that assembles 4-methylhex-2-enoic acid since both contain KS, AT, DH, cMT, ER, KR and ACP domains. The polyketide residue might be transferred to the NRPS lcsA, mediated by two additional enzymes, the acyl-CoA ligase lcsD and the thioesterase lcsE. The linear polyketide carboxylic acid, which is released from PKS, is converted to a CoA thioester by lcsD, and then lcsE hydrolyzes the thiol bond and shuttles the polyketide intermediate to lcsA. The C domain of the first module catalyzed the condensation of 4-methylhex-2-enoic acid and MePro carried by domain A1, followed by successive condensations of nine amino acids to trigger the elongation of the linear peptide. A5 and A6 domains of lcsA are proposed to incorporate leucine, A2 AHyMeOA, and A3 incorporates HyLeu. A4, A7 and A8 incorporate AIB. The AHyMeOA in leucinostatin A activated by the A2 might be produced by the second PKS (lcsB or lcsC) present within the cluster. The MePro is probably produced via leucine cyclization and may originate from a separate pathway, independent of the cluster. Another nonproteinogenic amino acid, beta-Ala, could be produced by an aspartic acid decarboxylase also localized outside of the cluster. Two candidates are VFPBJ_01400 and VFPBJ_10476. The final peptide scaffold may be released by the NAD(P)H-dependent thioester reductase (TE) at the C-terminal region of lcsA. Transamination of the lcsA product by the transaminase lcsP may produce DPD at the C-terminus. Further hydroxylation steps performed alternatively by the cytochrome P450 monooxygenases lcsI, lcsK and lcsN then yield the non-methylated leucinostatins precursor. It is also possible that leucines can be hydroxylated prior to their incorporation into the peptide. Varying extents of methylation then lead to the formation of leucinostatins A and B. In Purpureocillium lilacinum (Paecilomyces lilacinus), this protein is Cytochrome P450 monooxygenase lcsK.